The primary structure comprises 551 residues: Protein PLASTID TRANSCRIPTIONALLY ACTIVE 12, chloroplastic (551 aa).

A chloroplast-targeting transit peptide spans 1 to 47 (MASCSRTWLLPGMAPQATAQTVPRPLQSLKVFAGLPHRRRVLFSGVS). Disordered stretches follow at residues 76–161 (SSYF…EGES) and 463–529 (HSYN…DQLS). Residues 109–119 (RVRAARAPAPV) show a composition bias toward low complexity. Composition is skewed to acidic residues over residues 467–476 (EDSDDDEEDA) and 485–498 (SLED…DAED). Residues 505 to 516 (RNWSVLKTTGQA) are compositionally biased toward polar residues. Residues 518–529 (NPKEKSKKDQLS) show a composition bias toward basic and acidic residues.

Component of the plastid-encoded plastid RNA polymerase (PEP) complex.

It localises to the plastid. The protein localises to the chloroplast. Functionally, required for the activity of the plastid-encoded RNA polymerase (PEP) and full expression of genes transcribed by PEP. Required for the proper build-up and formation of the PEP-complex. Binds single-stranded (ss) DNA and RNA, but not double-stranded (ds) DNA. In Oryza sativa subsp. japonica (Rice), this protein is Protein PLASTID TRANSCRIPTIONALLY ACTIVE 12, chloroplastic.